A 710-amino-acid polypeptide reads, in one-letter code: Polyribonucleotide nucleotidyltransferase (710 aa).

Mg(2+) is bound by residues Asp-487 and Asp-493. One can recognise a KH domain in the interval Pro-554–Ile-613. Residues Gly-623 to Lys-691 form the S1 motif domain.

The protein belongs to the polyribonucleotide nucleotidyltransferase family. Mg(2+) is required as a cofactor.

Its subcellular location is the cytoplasm. The catalysed reaction is RNA(n+1) + phosphate = RNA(n) + a ribonucleoside 5'-diphosphate. Involved in mRNA degradation. Catalyzes the phosphorolysis of single-stranded polyribonucleotides processively in the 3'- to 5'-direction. This chain is Polyribonucleotide nucleotidyltransferase, found in Rhizobium rhizogenes (strain K84 / ATCC BAA-868) (Agrobacterium radiobacter).